The sequence spans 814 residues: Protein kinase C-binding protein NELL2 (814 aa).

The signal sequence occupies residues 1-19 (MEFILGIFCVLFCLRAGAG). Residues Asn51, Asn223, and Asn296 are each glycosylated (N-linked (GlcNAc...) asparagine). A Laminin G-like domain is found at 53–226 (SKAFLFQDTS…SQCPDLNRTC (174 aa)). Positions 270–329 (RSCTVKGNIYRELESWMDGCKKCTCTNGTAQCETLTCSAPNCLSGFSPAYVPGKCCKECQ) constitute a VWFC 1 domain. In terms of domain architecture, EGF-like 1 spans 395 to 437 (GHDFCSEGHNCMGYSICKNLDDKAVCICRDGFRALREDNAYCE). 3 disulfide bridges follow: Cys399–Cys411, Cys405–Cys420, and Cys422–Cys436. Residues Asp438, Ile439, and Glu441 each contribute to the Ca(2+) site. An EGF-like 2; calcium-binding domain is found at 438–479 (DIDECTEGRHYCRENTVCVNTPGSFMCVCQTGYLKIDDYSCT). Cystine bridges form between Cys442–Cys455, Cys449–Cys464, Cys466–Cys478, Cys484–Cys497, Cys491–Cys506, Cys508–Cys519, Cys523–Cys533, Cys527–Cys539, and Cys541–Cys550. Residues Asn457, Thr458, and Ser461 each contribute to the Ca(2+) site. One can recognise an EGF-like 3; calcium-binding domain in the interval 480–520 (EHNECATNQHSCDENAMCFNTVGGHNCVCQPGYTGNGTDCR). A glycan (N-linked (GlcNAc...) asparagine) is linked at Asn515. One can recognise an EGF-like 4 domain in the interval 521-551 (AFCKDGCRNGGTCIAPNICACPQGFTGPSCE). 3 residues coordinate Ca(2+): Asp553, Ile554, and Glu556. An EGF-like 5; calcium-binding domain is found at 553–599 (DIDECTEGFVQCDSRANCINLPGWYHCECRDGYHDNGMFSLGGESCE). 3 disulfides stabilise this stretch: Cys557–Cys570, Cys564–Cys579, and Cys581–Cys598. Positions 572, 573, and 576 each coordinate Ca(2+). Residues Asp600, Ile601, and Glu603 each contribute to the Ca(2+) site. Residues 600–635 (DIDECATGRHSCSNDTVCFNLDGGFDCRCPHGKNCS) enclose the EGF-like 6; calcium-binding domain. Cystine bridges form between Cys604–Cys617, Cys611–Cys626, and Cys628–Cys634. N-linked (GlcNAc...) asparagine glycosylation occurs at Asn613. Ca(2+) is bound by residues Asn619, Leu620, and Gly623. The N-linked (GlcNAc...) asparagine glycan is linked to Asn633. 2 consecutive VWFC domains span residues 636–691 (GDCT…PECD) and 696–754 (SQCL…PRCV).

In terms of assembly, homotrimer.

The protein localises to the secreted. In terms of biological role, may regulate neuronal differentiation, polarization and axon guidance. This Xenopus laevis (African clawed frog) protein is Protein kinase C-binding protein NELL2 (nell2.L).